Reading from the N-terminus, the 1040-residue chain is FHF complex subunit HOOK-interacting protein 1A (1040 aa).

3 disordered regions span residues 555–613 (PQQL…PIDP), 653–746 (SEDM…AAHP), and 769–808 (LMEQ…EDEE). A compositionally biased stretch (basic and acidic residues) spans 653–664 (SEDMKDSQEEAA). Over residues 677–690 (VPINNGPLLSTQPE) the composition is skewed to polar residues. Composition is skewed to basic and acidic residues over residues 696 to 719 (EWNR…REPE) and 783 to 804 (TKEE…KKEL).

The protein belongs to the FHIP family. May be a component of the FTS/Hook/FHIP complex (FHF complex), composed of AKTIP/FTS, FHIP1B, and one or more members of the Hook family of proteins HOOK1, HOOK2, and HOOK3. May interact directly with AKTIP/FTS.

Its function is as follows. Probable component of the FTS/Hook/FHIP complex (FHF complex). FHF complex promotes the distribution of AP-4 complex to the perinuclear area of the cell. This is FHF complex subunit HOOK-interacting protein 1A from Homo sapiens (Human).